The primary structure comprises 361 residues: Phosphoserine aminotransferase (361 aa).

L-glutamate-binding residues include Ser9 and Arg42. Residues 76–77, Trp102, Thr153, Asp173, and Gln196 contribute to the pyridoxal 5'-phosphate site; that span reads AR. Lys197 carries the post-translational modification N6-(pyridoxal phosphate)lysine. 238-239 is a pyridoxal 5'-phosphate binding site; sequence NT.

It belongs to the class-V pyridoxal-phosphate-dependent aminotransferase family. SerC subfamily. Homodimer. Requires pyridoxal 5'-phosphate as cofactor.

It localises to the cytoplasm. It catalyses the reaction O-phospho-L-serine + 2-oxoglutarate = 3-phosphooxypyruvate + L-glutamate. The catalysed reaction is 4-(phosphooxy)-L-threonine + 2-oxoglutarate = (R)-3-hydroxy-2-oxo-4-phosphooxybutanoate + L-glutamate. It functions in the pathway amino-acid biosynthesis; L-serine biosynthesis; L-serine from 3-phospho-D-glycerate: step 2/3. It participates in cofactor biosynthesis; pyridoxine 5'-phosphate biosynthesis; pyridoxine 5'-phosphate from D-erythrose 4-phosphate: step 3/5. Functionally, catalyzes the reversible conversion of 3-phosphohydroxypyruvate to phosphoserine and of 3-hydroxy-2-oxo-4-phosphonooxybutanoate to phosphohydroxythreonine. The polypeptide is Phosphoserine aminotransferase (Sodalis glossinidius (strain morsitans)).